Reading from the N-terminus, the 514-residue chain is 2-isopropylmalate synthase (514 aa).

The Pyruvate carboxyltransferase domain occupies 5–267 (VIIFDTTLRD…ETNIKHEEIH (263 aa)). The Mn(2+) site is built by Asp14, His202, His204, and Asn238. A regulatory domain region spans residues 392–514 (KLNYLSVQSG…AEIKERIATV (123 aa)).

It belongs to the alpha-IPM synthase/homocitrate synthase family. LeuA type 1 subfamily. In terms of assembly, homodimer. Mn(2+) is required as a cofactor.

The protein resides in the cytoplasm. It catalyses the reaction 3-methyl-2-oxobutanoate + acetyl-CoA + H2O = (2S)-2-isopropylmalate + CoA + H(+). It participates in amino-acid biosynthesis; L-leucine biosynthesis; L-leucine from 3-methyl-2-oxobutanoate: step 1/4. Functionally, catalyzes the condensation of the acetyl group of acetyl-CoA with 3-methyl-2-oxobutanoate (2-ketoisovalerate) to form 3-carboxy-3-hydroxy-4-methylpentanoate (2-isopropylmalate). The protein is 2-isopropylmalate synthase of Photobacterium profundum (strain SS9).